Here is a 560-residue protein sequence, read N- to C-terminus: Developmental and secondary metabolism regulator veA (560 aa).

Positions Gly35–Arg241 constitute a Velvet domain. Residues Glu49 to Cys54 carry the Nuclear localization signal motif. 3 disordered regions span residues Glu49 to Pro70, Lys171 to Gly197, and Asp250 to Tyr560. Over residues Lys171–Glu183 the composition is skewed to basic and acidic residues. Residues Ala336–Pro355 are compositionally biased toward pro residues. The segment covering Pro395–Arg405 has biased composition (basic and acidic residues). Residues Gln411–Leu439 show a composition bias toward pro residues. Polar residues predominate over residues Ile444–Arg453. The PEST stretch occupies residues Pro455 to Thr496. Over residues Ala461–Leu479 the composition is skewed to low complexity. Composition is skewed to basic and acidic residues over residues Arg508–Asp535 and Arg546–Tyr560.

This sequence belongs to the velvet family. VeA subfamily. As to quaternary structure, component of the heterotrimeric velvet complex composed of laeA, veA and velB; VeA acting as a bridging protein between laeA and velB.

It localises to the nucleus. The protein localises to the cytoplasm. Component of the velvet transcription factor complex that controls sexual/asexual developmental ratio in response to light, promoting sexual development in the darkness while stimulating asexual sporulation under illumination. The velvet complex acts as a global regulator for secondary metabolite gene expression. Positively regulates chaetoglobosin A biosynthesis by controlling the expression of core genes of the chaetoglobosin A biosynthetic gene cluster and other relevant regulators in a light-dependent manner. VeA directly regulates transcription factors brlA, laeA, and the chaetoglobosin A cluster-specific transcription regulator cheR. Also directly regulates the expression of one of the chaetoglobosin A cluster cytochrome P450 monooxygenases (cheE or cheG), but only indirectly regulates the expression of the PKS-NRPS hybrid cheA. Moreover, VeA has a significant effect on the asexual spores production, irrespective of light or dark condition. This is Developmental and secondary metabolism regulator veA from Chaetomium globosum (strain ATCC 6205 / CBS 148.51 / DSM 1962 / NBRC 6347 / NRRL 1970) (Soil fungus).